Reading from the N-terminus, the 223-residue chain is Endonuclease III (223 aa).

The HhH domain maps to 118–137 (RDFLTAIEGIGDKTADVVLL). Positions 198, 205, 208, and 214 each coordinate [4Fe-4S] cluster.

It belongs to the Nth/MutY family. [4Fe-4S] cluster is required as a cofactor.

It carries out the reaction 2'-deoxyribonucleotide-(2'-deoxyribose 5'-phosphate)-2'-deoxyribonucleotide-DNA = a 3'-end 2'-deoxyribonucleotide-(2,3-dehydro-2,3-deoxyribose 5'-phosphate)-DNA + a 5'-end 5'-phospho-2'-deoxyribonucleoside-DNA + H(+). Its function is as follows. Probably part of a 4-gene DNA damage response locus in which the upstream ups system, in combination with this downstream locus, functions in homologous recombination to rescue Sulfolobales from DNA-damaging threats. DNA repair enzyme that has both DNA N-glycosylase activity and AP-lyase activity. The DNA N-glycosylase activity releases various damaged pyrimidines from DNA by cleaving the N-glycosidic bond, leaving an AP (apurinic/apyrimidinic) site. The AP-lyase activity cleaves the phosphodiester bond 3' to the AP site by a beta-elimination, leaving a 3'-terminal unsaturated sugar and a product with a terminal 5'-phosphate. Nicks UV-treated plasmid DNA in a dose-dependent manner, has no activity on untreated DNA. In Sulfolobus acidocaldarius (strain ATCC 33909 / DSM 639 / JCM 8929 / NBRC 15157 / NCIMB 11770), this protein is Endonuclease III.